The primary structure comprises 235 residues: Replication protein (235 aa).

Tyr149 serves as a coordination point for DNA.

It belongs to the Gram-positive plasmids replication protein type 1 family.

Produces a single-strand nick in a specific site of the plasmid, and this nick results in single-strand replication by rolling circle mechanism. The protein is Replication protein (repB) of Bacillus sp.